Consider the following 447-residue polypeptide: Rab GDP dissociation inhibitor alpha (447 aa).

Residue S427 is modified to Phosphoserine.

It belongs to the Rab GDI family. Interacts with RHOH. Interacts with the non-phosphorylated forms of RAB1A, RAB3A, RAB5A, RAB5B, RAB5C, RAB8A, RAB8B, RAB10, RAB12, RAB35, and RAB43.

It localises to the cytoplasm. Its subcellular location is the golgi apparatus. The protein resides in the trans-Golgi network. Functionally, regulates the GDP/GTP exchange reaction of most Rab proteins by inhibiting the dissociation of GDP from them, and the subsequent binding of GTP to them. Promotes the dissociation of GDP-bound Rab proteins from the membrane and inhibits their activation. Promotes the dissociation of RAB1A, RAB3A, RAB5A and RAB10 from membranes. The polypeptide is Rab GDP dissociation inhibitor alpha (GDI1) (Canis lupus familiaris (Dog)).